Reading from the N-terminus, the 67-residue chain is UPF0435 protein SSP0913 (67 aa).

The protein belongs to the UPF0435 family.

In Staphylococcus saprophyticus subsp. saprophyticus (strain ATCC 15305 / DSM 20229 / NCIMB 8711 / NCTC 7292 / S-41), this protein is UPF0435 protein SSP0913.